The sequence spans 65 residues: Crotamine CRO1 (65 aa).

A signal peptide spans 1 to 22 (MKILYLLFAFLFLAFLSEPGNA). Disulfide bonds link Cys26-Cys58, Cys33-Cys52, and Cys40-Cys59.

The protein belongs to the crotamine-myotoxin family. As to quaternary structure, monomer. Expressed by the venom gland.

The protein resides in the secreted. Its function is as follows. Cationic peptide that possesses multiple functions. It acts as a cell-penetrating peptide (CPP), and as a potent voltage-gated potassium channel (Kv) inhibitor. It exhibits antimicrobial activities, hind limb paralysis, and severe muscle necrosis by a non-enzymatic mechanism. The polypeptide is Crotamine CRO1 (CRO1) (Crotalus durissus terrificus (South American rattlesnake)).